The chain runs to 273 residues: Undecaprenyl-diphosphatase (273 aa).

The next 7 membrane-spanning stretches (helical) occupy residues 6-26, 45-65, 90-110, 116-136, 190-210, 222-242, and 252-272; these read SLLIAAILGVVEGLTEFLPVS, AKTFEVVIQLGSILAVVVMFW, LTLIHILLGMIPAVVLGLLFH, LFNPINVMYALVVGGLLLIAA, YAASEFSFLLAVPMMMGATAL, GDIPMFAVGFITAFVVALIAI, and ISFIPFAIYRFIVAAAVYVVF.

The protein belongs to the UppP family.

It localises to the cell inner membrane. The enzyme catalyses di-trans,octa-cis-undecaprenyl diphosphate + H2O = di-trans,octa-cis-undecaprenyl phosphate + phosphate + H(+). Functionally, catalyzes the dephosphorylation of undecaprenyl diphosphate (UPP). Confers resistance to bacitracin. This is Undecaprenyl-diphosphatase from Escherichia coli O157:H7.